Here is a 347-residue protein sequence, read N- to C-terminus: Phosphate acyltransferase (347 aa).

The protein belongs to the PlsX family. As to quaternary structure, homodimer. Probably interacts with PlsY.

The protein resides in the cytoplasm. It carries out the reaction a fatty acyl-[ACP] + phosphate = an acyl phosphate + holo-[ACP]. The protein operates within lipid metabolism; phospholipid metabolism. In terms of biological role, catalyzes the reversible formation of acyl-phosphate (acyl-PO(4)) from acyl-[acyl-carrier-protein] (acyl-ACP). This enzyme utilizes acyl-ACP as fatty acyl donor, but not acyl-CoA. The sequence is that of Phosphate acyltransferase from Sinorhizobium fredii (strain NBRC 101917 / NGR234).